Here is a 107-residue protein sequence, read N- to C-terminus: Nucleoid-associated protein RT0857 (107 aa).

The protein belongs to the YbaB/EbfC family. In terms of assembly, homodimer.

Its subcellular location is the cytoplasm. The protein localises to the nucleoid. Its function is as follows. Binds to DNA and alters its conformation. May be involved in regulation of gene expression, nucleoid organization and DNA protection. The polypeptide is Nucleoid-associated protein RT0857 (Rickettsia typhi (strain ATCC VR-144 / Wilmington)).